The sequence spans 829 residues: Conserved oligomeric Golgi complex subunit 5 (829 aa).

Phosphoserine is present on S166.

Belongs to the COG5 family. In terms of assembly, component of the conserved oligomeric Golgi complex which is composed of eight different subunits and is required for normal Golgi morphology and localization.

The protein resides in the cytoplasm. Its subcellular location is the cytosol. The protein localises to the golgi apparatus membrane. Its function is as follows. Required for normal Golgi function. This is Conserved oligomeric Golgi complex subunit 5 (Cog5) from Mus musculus (Mouse).